A 148-amino-acid chain; its full sequence is Large ribosomal subunit protein bL9 (148 aa).

It belongs to the bacterial ribosomal protein bL9 family.

Binds to the 23S rRNA. The protein is Large ribosomal subunit protein bL9 of Thermus thermophilus (strain ATCC BAA-163 / DSM 7039 / HB27).